The primary structure comprises 49 residues: uncharacterized protein (49 aa).

The chain crosses the membrane as a helical span at residues 23-43 (LYVISFVLFIVLFFGMFFKLI).

It localises to the host membrane. This is an uncharacterized protein from Spiroplasma melliferum (SpV1).